Consider the following 176-residue polypeptide: Inorganic pyrophosphatase (176 aa).

Residues lysine 30, arginine 44, and tyrosine 56 each contribute to the substrate site. The Mg(2+) site is built by aspartate 66, aspartate 71, and aspartate 103. Tyrosine 142 is a binding site for substrate.

It belongs to the PPase family. As to quaternary structure, homohexamer. The cofactor is Mg(2+).

The protein resides in the cytoplasm. The catalysed reaction is diphosphate + H2O = 2 phosphate + H(+). In terms of biological role, catalyzes the hydrolysis of inorganic pyrophosphate (PPi) forming two phosphate ions. The sequence is that of Inorganic pyrophosphatase from Brucella melitensis biotype 1 (strain ATCC 23456 / CCUG 17765 / NCTC 10094 / 16M).